The chain runs to 307 residues: Acetaldehyde dehydrogenase (307 aa).

12–15 (SGNI) serves as a coordination point for NAD(+). The active-site Acyl-thioester intermediate is Cys130. NAD(+) is bound by residues 161–169 (SVGPGTRQN) and Asn272.

This sequence belongs to the acetaldehyde dehydrogenase family.

The enzyme catalyses acetaldehyde + NAD(+) + CoA = acetyl-CoA + NADH + H(+). The chain is Acetaldehyde dehydrogenase from Shewanella halifaxensis (strain HAW-EB4).